Consider the following 564-residue polypeptide: Excitatory amino acid transporter 4 (564 aa).

Topologically, residues 1–55 are cytoplasmic; the sequence is MSSHGNSLFLRESGQRLGRVGWLQRLQESLQQRALRTRLRLQTMTREHVLRFLRR. Phosphoserine is present on serine 2. 3 helical membrane-spanning segments follow: residues 56 to 76, 99 to 119, and 133 to 153; these read NAFILLTVSAVVIGVSLAFAL, MLQMLVLPLIVSSLVTGMASL, and VYYMVTTVIAVFIGILMVTII. 3 N-linked (GlcNAc...) asparagine glycosylation sites follow: asparagine 216, asparagine 232, and asparagine 239. 3 helical membrane-spanning segments follow: residues 262 to 285, 295 to 322, and 344 to 365; these read SANGINALGLVVFSVAFGLVIGGV, FFDSLNEAIMRMVGIIIWYAPVGILFLI, and LTVIVGLFLHAGGVLPLIYFLI. Residues 371 to 401 constitute an intramembrane region (discontinuously helical); it reads FPFIGGVLQALITAMGTSSSSATLPITFRCL. Residue 388–390 coordinates L-aspartate; the sequence is SSS. A helical transmembrane segment spans residues 411–437; sequence ITRFVLPVGATVNMDGTALYEALAAIF. Na(+) contacts are provided by glycine 419, threonine 421, and asparagine 423. Residues threonine 427, 468 to 472, aspartate 501, and asparagine 508 contribute to the L-aspartate site; that span reads IPQAG. An intramembrane region (discontinuously helical) is located at residues 451–484; the sequence is ITTISITATAASVGAAGIPQAGLVTMVIVLTSVG. The chain crosses the membrane as a helical span at residues 498–519; it reads WFLDRLRTMTNVLGDSIGAAVI. Na(+) contacts are provided by asparagine 508 and aspartate 512.

This sequence belongs to the dicarboxylate/amino acid:cation symporter (DAACS) (TC 2.A.23) family. SLC1A6 subfamily. As to quaternary structure, homotrimer. As to expression, detected in brain, cerebellum and hippocampus.

It localises to the cell membrane. It catalyses the reaction K(+)(in) + L-glutamate(out) + 3 Na(+)(out) + H(+)(out) = K(+)(out) + L-glutamate(in) + 3 Na(+)(in) + H(+)(in). The catalysed reaction is K(+)(in) + L-aspartate(out) + 3 Na(+)(out) + H(+)(out) = K(+)(out) + L-aspartate(in) + 3 Na(+)(in) + H(+)(in). It carries out the reaction D-aspartate(out) + K(+)(in) + 3 Na(+)(out) + H(+)(out) = D-aspartate(in) + K(+)(out) + 3 Na(+)(in) + H(+)(in). Functionally, sodium-dependent, high-affinity amino acid transporter that mediates the uptake of L-glutamate and also L-aspartate and D-aspartate. Functions as a symporter that transports one amino acid molecule together with two or three Na(+) ions and one proton, in parallel with the counter-transport of one K(+) ion. Mediates Cl(-) flux that is not coupled to amino acid transport; this avoids the accumulation of negative charges due to aspartate and Na(+) symport. Plays a redundant role in the rapid removal of released glutamate from the synaptic cleft, which is essential for terminating the postsynaptic action of glutamate. The sequence is that of Excitatory amino acid transporter 4 (SLC1A6) from Canis lupus familiaris (Dog).